The chain runs to 332 residues: Melanocortin receptor 4 (332 aa).

Topologically, residues 1-43 (MNSTLQHGMHTSLHFWNRSTYGQHSNATESLGKGYPDGGCYEQ) are extracellular. Asparagine 2, asparagine 17, and asparagine 26 each carry an N-linked (GlcNAc...) asparagine glycan. 2 disulfide bridges follow: cysteine 40–cysteine 279 and cysteine 271–cysteine 277. The helical transmembrane segment at 44 to 69 (LFVSPEVFVTLGVISLLENILVIVAI) threads the bilayer. Residues 70 to 81 (AKNKNLHSPMYF) lie on the Cytoplasmic side of the membrane. A helical transmembrane segment spans residues 82 to 106 (FICSLAVADMLVSVSNGSETIVITL). Ca(2+) contacts are provided by glutamate 100, aspartate 122, and aspartate 126. Over 107–123 (LNSTDTDAQSFTVNIDN) the chain is Extracellular. The helical transmembrane segment at 124 to 145 (VIDSVICSSLLASICSLLSIAV) threads the bilayer. The Cytoplasmic segment spans residues 146 to 165 (DRYFTIFYALQYHNIMTVRR). Residues 166–186 (VGIIISCIWAACTVSGILFII) traverse the membrane as a helical segment. Over 187-191 (YSDST) the chain is Extracellular. The chain crosses the membrane as a helical span at residues 192–215 (AVIICLITMFFTMLALMASLYVHM). Topologically, residues 216–248 (FLMARLHIKRIAVLPGTGTIRQGANMKGAITLT) are cytoplasmic. The chain crosses the membrane as a helical span at residues 249-271 (ILIGVFVVCWAPFFLHLIFYISC). Topologically, residues 272 to 280 (PQNPYCVCF) are extracellular. The chain crosses the membrane as a helical span at residues 281 to 304 (MSHFNLYLILIMCNSIIDPLIYAL). The Cytoplasmic portion of the chain corresponds to 305-332 (RSQELRKTFKEIICCYPLGGLCDLSSRY). Residue cysteine 318 is the site of S-palmitoyl cysteine attachment.

This sequence belongs to the G-protein coupled receptor 1 family. Homodimer; disulfide-linked, also forms higher order oligomers. Interacts with GNAS. Interacts with ATRNL1. Interacts with MGRN1; this interaction competes with GNAS-binding and thus inhibits agonist-induced cAMP production. Interacts with MRAP and MRAP2; these associated factors increase ligand-sensitivity and generation of cAMP.

It is found in the cell membrane. Functionally, hormone receptor that acts as a key component of the leptin-melanocortin pathway at the intersection of homeostatic maintenance of energetic state. Plays a role in regulating food intake: activation by a stimulating hormone such as anorexigenic alpha-melanocyte stimulating hormone (alpha-MSH) inhibits appetite, whereas binding to a natural antagonist like Agouti-related protein/AGRP promotes appetite. G-protein-coupled receptor that activates conventional Galphas signaling leading to induction of anorexogenic signaling in the hypothalamus to result in negative energy balance. Regulates the firing activity of neurons from the hypothalamus by alpha-MSH and AGRP independently of Galphas signaling by ligand-induced coupling of closure of inwardly rectifying potassium channel KCNJ13. In intestinal epithelial cells, plays a role in the inhibition of hepatic glucose production via nesfatin-1/NUCB2 leading to increased cyclic adenosine monophosphate (cAMP) levels and glucagon-like peptide 1 (GLP-1) secretion in the intestinal epithelium. This Vulpes vulpes (Red fox) protein is Melanocortin receptor 4 (MC4R).